Consider the following 182-residue polypeptide: Transcription termination/antitermination protein NusG (182 aa).

Belongs to the NusG family.

Participates in transcription elongation, termination and antitermination. This is Transcription termination/antitermination protein NusG from Chlamydia trachomatis serovar D (strain ATCC VR-885 / DSM 19411 / UW-3/Cx).